Consider the following 445-residue polypeptide: Signal recognition particle 54 kDa protein (445 aa).

GTP-binding positions include 102 to 109 (GVQGSGKT), 184 to 188 (DTAGR), and 244 to 247 (TKMD).

Belongs to the GTP-binding SRP family. SRP54 subfamily. As to quaternary structure, part of the signal recognition particle protein translocation system, which is composed of SRP and FtsY. Archaeal SRP consists of a 7S RNA molecule of 300 nucleotides and two protein subunits: SRP54 and SRP19.

It localises to the cytoplasm. It carries out the reaction GTP + H2O = GDP + phosphate + H(+). Its function is as follows. Involved in targeting and insertion of nascent membrane proteins into the cytoplasmic membrane. Binds to the hydrophobic signal sequence of the ribosome-nascent chain (RNC) as it emerges from the ribosomes. The SRP-RNC complex is then targeted to the cytoplasmic membrane where it interacts with the SRP receptor FtsY. This chain is Signal recognition particle 54 kDa protein, found in Sulfurisphaera tokodaii (strain DSM 16993 / JCM 10545 / NBRC 100140 / 7) (Sulfolobus tokodaii).